A 315-amino-acid polypeptide reads, in one-letter code: Aspartate carbamoyltransferase catalytic subunit (315 aa).

Carbamoyl phosphate-binding residues include Arg-65 and Thr-66. Lys-93 serves as a coordination point for L-aspartate. Positions 115, 145, and 148 each coordinate carbamoyl phosphate. Residues Arg-179 and Arg-234 each coordinate L-aspartate. Residues Gly-275 and Pro-276 each contribute to the carbamoyl phosphate site.

It belongs to the aspartate/ornithine carbamoyltransferase superfamily. ATCase family. Heterododecamer (2C3:3R2) of six catalytic PyrB chains organized as two trimers (C3), and six regulatory PyrI chains organized as three dimers (R2).

The catalysed reaction is carbamoyl phosphate + L-aspartate = N-carbamoyl-L-aspartate + phosphate + H(+). The protein operates within pyrimidine metabolism; UMP biosynthesis via de novo pathway; (S)-dihydroorotate from bicarbonate: step 2/3. Its function is as follows. Catalyzes the condensation of carbamoyl phosphate and aspartate to form carbamoyl aspartate and inorganic phosphate, the committed step in the de novo pyrimidine nucleotide biosynthesis pathway. This is Aspartate carbamoyltransferase catalytic subunit from Xanthomonas oryzae pv. oryzae (strain MAFF 311018).